The primary structure comprises 246 residues: ATP synthase subunit a (246 aa).

Residues 1–3 (MFY) constitute a propeptide, removed in mature form. 7 consecutive transmembrane segments (helical) span residues 21 to 41 (LTFS…IIIF), 56 to 76 (WGVS…GQIG), 82 to 102 (YFPL…ISMI), 113 to 133 (VAVV…GLYL), 138 to 158 (FFAL…LVLI), 184 to 204 (LMLI…LGFV), and 206 to 226 (GIIP…IAII).

The protein belongs to the ATPase A chain family. In terms of assembly, F-type ATPases have 2 components, CF(1) - the catalytic core - and CF(0) - the membrane proton channel. CF(1) has five subunits: alpha(3), beta(3), gamma(1), delta(1), epsilon(1). CF(0) has three main subunits: a, b and c.

It is found in the mitochondrion inner membrane. Mitochondrial membrane ATP synthase (F(1)F(0) ATP synthase or Complex V) produces ATP from ADP in the presence of a proton gradient across the membrane which is generated by electron transport complexes of the respiratory chain. F-type ATPases consist of two structural domains, F(1) - containing the extramembraneous catalytic core and F(0) - containing the membrane proton channel, linked together by a central stalk and a peripheral stalk. During catalysis, ATP synthesis in the catalytic domain of F(1) is coupled via a rotary mechanism of the central stalk subunits to proton translocation. Key component of the proton channel; it may play a direct role in the translocation of protons across the membrane. The chain is ATP synthase subunit a (ATP6) from Candida parapsilosis (Yeast).